The following is a 542-amino-acid chain: uncharacterized protein (542 aa).

Transmembrane regions (helical) follow at residues 4–23, 28–47, 57–79, 86–108, and 151–173; these read ILRD…GYPL, IGGI…AFGA, IVYQ…HGFL, GVIY…LIPH, and PVVG…IYLA. 2 RCK C-terminal domains span residues 186-270 and 273-356; these read RTLK…VIGC and EVQA…LGDS. Transmembrane regions (helical) follow at residues 365–384, 389–408, 415–437, 457–479, 484–506, and 519–541; these read IAVL…VPIP, ITVR…FLGA, LVWV…IFLA, WAIL…YVGY, IPMG…LGFA, and YAMV…IAVL.

Belongs to the AAE transporter (TC 2.A.81) family.

It is found in the cell membrane. This is an uncharacterized protein from Symbiobacterium thermophilum (strain DSM 24528 / JCM 14929 / IAM 14863 / T).